The primary structure comprises 1447 residues: Calcium-dependent secretion activator (1447 aa).

The span at 1–15 shows a compositional bias: acidic residues; sequence MIDPSSSEEEGEDDA. Disordered regions lie at residues 1-35 and 101-163; these read MIDPSSSEEEGEDDAVPNVSSKGRLTNTTKGTSAV and DTGN…EEEE. 2 stretches are compositionally biased toward polar residues: residues 18-32 and 111-126; these read NVSSKGRLTNTTKGT and GIPSGISQETLNQSVG. Positions 127–144 are enriched in low complexity; that stretch reads SSRANSLPRPLSPSPSLT. Residues 145–163 show a composition bias toward basic and acidic residues; that stretch reads SEKHETAEPHGKHEREEEE. A C2 domain is found at 417-547; sequence SKYGLQKLKR…PLSSKSPEWH (131 aa). The PH domain occupies 573–683; that stretch reads NMKHCGYLYA…WVMAMYRATG (111 aa). Residues 970–1157 enclose the MHD1 domain; it reads VDMDRVLSEQ…DMIEQCIQRT (188 aa). The span at 1386–1395 shows a compositional bias: acidic residues; the sequence is REGEEEDNGD. Residues 1386–1406 form a disordered region; it reads REGEEEDNGDESTSNIPRGLP.

Restricted to the nervous system at all stages of development and highly localized at synapses (at protein level).

Its subcellular location is the cytoplasmic vesicle membrane. The protein resides in the synapse. Functionally, calcium-binding protein involved in exocytosis of vesicles filled with neurotransmitters and neuropeptides. May specifically mediate the Ca(2+)-dependent exocytosis of large dense-core vesicles (DCVs) and other dense-core vesicles. However, it probably also participates in small clear synaptic vesicles (SVs) exocytosis and it is unclear whether its function is related to Ca(2+) triggering. This Drosophila melanogaster (Fruit fly) protein is Calcium-dependent secretion activator.